The following is a 375-amino-acid chain: Chaperone protein DnaJ (375 aa).

Positions 5 to 70 constitute a J domain; sequence DYYELLGISR…EKRAAYDQYG (66 aa). The CR-type zinc-finger motif lies at 132-210; the sequence is GTTKDIKIHT…CHGDGRVNKA (79 aa). Zn(2+)-binding residues include Cys145, Cys148, Cys162, Cys165, Cys184, Cys187, Cys198, and Cys201. 4 CXXCXGXG motif repeats span residues 145 to 152, 162 to 169, 184 to 191, and 198 to 205; these read CDTCHGTG, CPHCHGAG, CHFCHGTG, and CKTCHGDG.

It belongs to the DnaJ family. Homodimer. Requires Zn(2+) as cofactor.

The protein localises to the cytoplasm. Functionally, participates actively in the response to hyperosmotic and heat shock by preventing the aggregation of stress-denatured proteins and by disaggregating proteins, also in an autonomous, DnaK-independent fashion. Unfolded proteins bind initially to DnaJ; upon interaction with the DnaJ-bound protein, DnaK hydrolyzes its bound ATP, resulting in the formation of a stable complex. GrpE releases ADP from DnaK; ATP binding to DnaK triggers the release of the substrate protein, thus completing the reaction cycle. Several rounds of ATP-dependent interactions between DnaJ, DnaK and GrpE are required for fully efficient folding. Also involved, together with DnaK and GrpE, in the DNA replication of plasmids through activation of initiation proteins. This Aggregatibacter actinomycetemcomitans (Actinobacillus actinomycetemcomitans) protein is Chaperone protein DnaJ.